The chain runs to 274 residues: uncharacterized protein (274 aa).

The C2 NT-type domain occupies 3-141 (IFIPKARRPT…TIRIGISLKQ (139 aa)).

To yeast YBL086c.

This is an uncharacterized protein from Schizosaccharomyces pombe (strain 972 / ATCC 24843) (Fission yeast).